The following is a 474-amino-acid chain: NADH-ubiquinone oxidoreductase chain 4 (474 aa).

Helical transmembrane passes span 34–54 (SFFLMLVLALFCALFTFDLMF), 86–106 (LYGLILVFLCLLTGFVAISTV), 115–135 (LKFYLIFFQFFLAVLGFIKCS), 137–157 (LIAFFFFYEVLMLGSVLVVFF), 167–187 (AVIYFVAWTQLGSLFVLLACL), 211–231 (AMTIYSLLFVGFGIKFPIWPL), 242–262 (ASTGFSIYLSGFLVKTALFGF), 276–295 (TFFLAVLVAGVIDSSLNMWS), 302–322 (LVAYCTIQEMNLIAIFFLKGD), 325–345 (LIAYGFLFTIMHALMSTLMFF), 373–393 (ALAIIFMVLFFSGILGTLKFV), 405–425 (VSWPIGVIFVVVVSAIGLIGF), and 454–474 (YIIFLCFAGLIFLTFLPFLMI).

This sequence belongs to the complex I subunit 4 family.

The protein resides in the mitochondrion membrane. It carries out the reaction a ubiquinone + NADH + 5 H(+)(in) = a ubiquinol + NAD(+) + 4 H(+)(out). Functionally, core subunit of the mitochondrial membrane respiratory chain NADH dehydrogenase (Complex I) that is believed to belong to the minimal assembly required for catalysis. Complex I functions in the transfer of electrons from NADH to the respiratory chain. The immediate electron acceptor for the enzyme is believed to be ubiquinone. This Paramecium tetraurelia protein is NADH-ubiquinone oxidoreductase chain 4 (ND4).